The sequence spans 66 residues: MAKGKDIRIIVILECTGCDQKSVNKESSGISRYITQKNRHNTPSRLELIKFCPCCRKHMIHAEIKK.

It belongs to the bacterial ribosomal protein bL33 family.

The protein localises to the plastid. Its subcellular location is the chloroplast. This is Large ribosomal subunit protein bL33c from Lotus japonicus (Lotus corniculatus var. japonicus).